Reading from the N-terminus, the 247-residue chain is uncharacterized protein (247 aa).

An N-acetyltransferase domain is found at 70 to 205 (ISLWMGPGNN…QKVPLEIMIR (136 aa)).

The protein belongs to the acetyltransferase family.

It localises to the endoplasmic reticulum. The protein localises to the golgi apparatus. Its subcellular location is the vacuole. This is an uncharacterized protein from Schizosaccharomyces pombe (strain 972 / ATCC 24843) (Fission yeast).